Consider the following 511-residue polypeptide: Pentatricopeptide repeat-containing protein At5g08510 (511 aa).

10 PPR repeats span residues 46 to 80 (CTFLYNKLIQAYYVHHQPHESIVLYNLLSFDGLRP), 81 to 115 (SHHTFNFIFAASASFSSARPLRLLHSQFFRSGFES), 116 to 146 (DSFCCTTLITAYAKLGALCCARRVFDEMSKR), 147 to 181 (DVPVWNAMITGYQRRGDMKAAMELFDSMPRKNVTS), 182 to 213 (WTTVISGFSQNGNYSEALKMFLCMEKDKSVKP), 214 to 248 (NHITVVSVLPACANLGELEIGRRLEGYARENGFFD), 249 to 279 (NIYVCNATIEMYSKCGMIDVAKRLFEELGNQ), 281 to 315 (NLCSWNSMIGSLATHGKHDEALTLFAQMLREGEKP), 316 to 346 (DAVTFVGLLLACVHGGMVVKGQELFKSMEEV), and 352 to 382 (KLEHYGCMIDLLGRVGKLQEAYDLIKTMPMK). The type E motif stretch occupies residues 387-462 (VWGTLLGACS…AAGYSYFVEV (76 aa)). The segment at 463-494 (GVDVHKFTVEDKSHPRSYEIYQVLEEIFRRMK) is type E(+) motif.

It belongs to the PPR family. PCMP-E subfamily.

This is Pentatricopeptide repeat-containing protein At5g08510 (PCMP-E20) from Arabidopsis thaliana (Mouse-ear cress).